Reading from the N-terminus, the 342-residue chain is Methionine import ATP-binding protein MetN 2 (342 aa).

The 240-residue stretch at 2–241 (ISIEGLSKVF…PKQLVTRKFV (240 aa)) folds into the ABC transporter domain. 38 to 45 (GYSGAGKS) serves as a coordination point for ATP.

Belongs to the ABC transporter superfamily. Methionine importer (TC 3.A.1.24) family. The complex is composed of two ATP-binding proteins (MetN), two transmembrane proteins (MetI) and a solute-binding protein (MetQ).

The protein localises to the cell membrane. It catalyses the reaction L-methionine(out) + ATP + H2O = L-methionine(in) + ADP + phosphate + H(+). The catalysed reaction is D-methionine(out) + ATP + H2O = D-methionine(in) + ADP + phosphate + H(+). In terms of biological role, part of the ABC transporter complex MetNIQ involved in methionine import. Responsible for energy coupling to the transport system. This Oceanobacillus iheyensis (strain DSM 14371 / CIP 107618 / JCM 11309 / KCTC 3954 / HTE831) protein is Methionine import ATP-binding protein MetN 2.